The following is a 376-amino-acid chain: 23S rRNA (uracil(747)-C(5))-methyltransferase RlmC (376 aa).

Positions 3, 11, 14, and 87 each coordinate [4Fe-4S] cluster. Residues Gln-212, Phe-241, Glu-262, and Asn-307 each coordinate S-adenosyl-L-methionine. The Nucleophile role is filled by Cys-334.

This sequence belongs to the class I-like SAM-binding methyltransferase superfamily. RNA M5U methyltransferase family. RlmC subfamily.

The catalysed reaction is uridine(747) in 23S rRNA + S-adenosyl-L-methionine = 5-methyluridine(747) in 23S rRNA + S-adenosyl-L-homocysteine + H(+). Functionally, catalyzes the formation of 5-methyl-uridine at position 747 (m5U747) in 23S rRNA. The sequence is that of 23S rRNA (uracil(747)-C(5))-methyltransferase RlmC from Yersinia pseudotuberculosis serotype I (strain IP32953).